Here is a 787-residue protein sequence, read N- to C-terminus: Phenylalanine--tRNA ligase beta subunit (787 aa).

In terms of domain architecture, tRNA-binding spans 39 to 149; the sequence is APAFSGVVVA…EDAPVGTNIR (111 aa). Positions 400-475 constitute a B5 domain; that stretch reads PEAKQVGLRL…RVYGYENIPD (76 aa). Mg(2+) contacts are provided by D453, D459, E462, and E463. The FDX-ACB domain occupies 694–786; the sequence is SKFQPVRRDL…VATEAGARLR (93 aa).

The protein belongs to the phenylalanyl-tRNA synthetase beta subunit family. Type 1 subfamily. As to quaternary structure, tetramer of two alpha and two beta subunits. Mg(2+) is required as a cofactor.

Its subcellular location is the cytoplasm. The catalysed reaction is tRNA(Phe) + L-phenylalanine + ATP = L-phenylalanyl-tRNA(Phe) + AMP + diphosphate + H(+). In Neisseria gonorrhoeae (strain ATCC 700825 / FA 1090), this protein is Phenylalanine--tRNA ligase beta subunit.